Reading from the N-terminus, the 802-residue chain is Lon protease (802 aa).

The region spanning 21 to 215 (LPLLPVRDII…KIIQILNAEI (195 aa)) is the Lon N-terminal domain. 367 to 374 (GPPGVGKT) contributes to the ATP binding site. In terms of domain architecture, Lon proteolytic spans 603-784 (ENDVGVATGL…DEVISLTIER (182 aa)). Active-site residues include Ser-690 and Lys-733.

The protein belongs to the peptidase S16 family. Homohexamer. Organized in a ring with a central cavity.

Its subcellular location is the cytoplasm. The catalysed reaction is Hydrolysis of proteins in presence of ATP.. Functionally, ATP-dependent serine protease that mediates the selective degradation of mutant and abnormal proteins as well as certain short-lived regulatory proteins. Required for cellular homeostasis and for survival from DNA damage and developmental changes induced by stress. Degrades polypeptides processively to yield small peptide fragments that are 5 to 10 amino acids long. Binds to DNA in a double-stranded, site-specific manner. The polypeptide is Lon protease (Endomicrobium trichonymphae).